A 485-amino-acid chain; its full sequence is Glycogen synthase (485 aa).

K20 lines the ADP-alpha-D-glucose pocket.

Belongs to the glycosyltransferase 1 family. Bacterial/plant glycogen synthase subfamily.

The catalysed reaction is [(1-&gt;4)-alpha-D-glucosyl](n) + ADP-alpha-D-glucose = [(1-&gt;4)-alpha-D-glucosyl](n+1) + ADP + H(+). The protein operates within glycan biosynthesis; glycogen biosynthesis. Synthesizes alpha-1,4-glucan chains using ADP-glucose. This is Glycogen synthase from Vibrio parahaemolyticus serotype O3:K6 (strain RIMD 2210633).